Consider the following 358-residue polypeptide: tRNA-specific 2-thiouridylase MnmA (358 aa).

ATP is bound by residues 8 to 15 (GLSGGVDS) and L34. Residue C95 is the Nucleophile of the active site. A disulfide bridge links C95 with C194. G120 is an ATP binding site. The interaction with tRNA stretch occupies residues 144 to 146 (KDQ). Residue C194 is the Cysteine persulfide intermediate of the active site. An interaction with tRNA region spans residues 299–300 (RY).

This sequence belongs to the MnmA/TRMU family.

The protein resides in the cytoplasm. It catalyses the reaction S-sulfanyl-L-cysteinyl-[protein] + uridine(34) in tRNA + AH2 + ATP = 2-thiouridine(34) in tRNA + L-cysteinyl-[protein] + A + AMP + diphosphate + H(+). Its function is as follows. Catalyzes the 2-thiolation of uridine at the wobble position (U34) of tRNA, leading to the formation of s(2)U34. The sequence is that of tRNA-specific 2-thiouridylase MnmA from Synechocystis sp. (strain ATCC 27184 / PCC 6803 / Kazusa).